The following is a 345-amino-acid chain: N-acetyl-gamma-glutamyl-phosphate reductase (345 aa).

Residue C149 is part of the active site.

It belongs to the NAGSA dehydrogenase family. Type 1 subfamily.

The protein resides in the cytoplasm. The enzyme catalyses N-acetyl-L-glutamate 5-semialdehyde + phosphate + NADP(+) = N-acetyl-L-glutamyl 5-phosphate + NADPH + H(+). Its pathway is amino-acid biosynthesis; L-arginine biosynthesis; N(2)-acetyl-L-ornithine from L-glutamate: step 3/4. Functionally, catalyzes the NADPH-dependent reduction of N-acetyl-5-glutamyl phosphate to yield N-acetyl-L-glutamate 5-semialdehyde. The chain is N-acetyl-gamma-glutamyl-phosphate reductase from Desulforapulum autotrophicum (strain ATCC 43914 / DSM 3382 / VKM B-1955 / HRM2) (Desulfobacterium autotrophicum).